The chain runs to 85 residues: MPRTKKVGSAGRFGPRYGLKIRRRVAAVEEKMRQKHTCPVCGRKAVRRISTGIWQCQKCGATFAGGAYLPATPAGRIAKRGISSP.

Residues 38–59 (CPVCGRKAVRRISTGIWQCQKC) form a C4-type zinc finger.

The protein belongs to the eukaryotic ribosomal protein eL43 family. The cofactor is Zn(2+).

The polypeptide is Large ribosomal subunit protein eL43 (Thermococcus sibiricus (strain DSM 12597 / MM 739)).